The primary structure comprises 365 residues: S-adenosylmethionine:tRNA ribosyltransferase-isomerase (365 aa).

It belongs to the QueA family. Monomer.

It localises to the cytoplasm. It carries out the reaction 7-aminomethyl-7-carbaguanosine(34) in tRNA + S-adenosyl-L-methionine = epoxyqueuosine(34) in tRNA + adenine + L-methionine + 2 H(+). The protein operates within tRNA modification; tRNA-queuosine biosynthesis. Functionally, transfers and isomerizes the ribose moiety from AdoMet to the 7-aminomethyl group of 7-deazaguanine (preQ1-tRNA) to give epoxyqueuosine (oQ-tRNA). This Rickettsia rickettsii (strain Iowa) protein is S-adenosylmethionine:tRNA ribosyltransferase-isomerase.